We begin with the raw amino-acid sequence, 383 residues long: Nuclear hormone receptor family member nhr-217 (383 aa).

Positions 53 to 127 form a DNA-binding region, nuclear receptor; it reads IPACPVCDVP…AGLQRDYVRQ (75 aa). 2 consecutive NR C4-type zinc fingers follow at residues 56–77 and 93–109; these read CPVC…CAAC and CKRE…CRAC. The NR LBD domain occupies 172 to 383; sequence ILKVSNSSLF…KLYVQIGIPF (212 aa).

Belongs to the nuclear hormone receptor family.

The protein resides in the nucleus. Functionally, orphan nuclear receptor. In Caenorhabditis elegans, this protein is Nuclear hormone receptor family member nhr-217 (nhr-217).